A 1106-amino-acid polypeptide reads, in one-letter code: Communication mutant protein F (1106 aa).

The signal sequence occupies residues 1 to 28; the sequence is MKIYKKNHFLKILIIFIYLSCNILKVNA. In terms of domain architecture, G8 spans 254 to 380; that stretch reads TIWPNGVVPS…YHNTWSKLAS (127 aa). 7 N-linked (GlcNAc...) asparagine glycosylation sites follow: Asn-267, Asn-306, Asn-512, Asn-536, Asn-677, Asn-715, and Asn-833.

It belongs to the comF family.

It is found in the secreted. In Dictyostelium discoideum (Social amoeba), this protein is Communication mutant protein F (comF-1).